A 392-amino-acid polypeptide reads, in one-letter code: Formate-dependent phosphoribosylglycinamide formyltransferase (392 aa).

N(1)-(5-phospho-beta-D-ribosyl)glycinamide-binding positions include 22–23 and E82; that span reads EL. Residues R114, K155, 160 to 165, 195 to 198, and E203 contribute to the ATP site; these read SSGKGQ and EGVV. Positions 119-308 constitute an ATP-grasp domain; sequence RLAAEELWVP…EFALHVRAFL (190 aa). Mg(2+) is bound by residues E267 and E279. Residues D286, K355, and 362-363 each bind N(1)-(5-phospho-beta-D-ribosyl)glycinamide; that span reads RR.

It belongs to the PurK/PurT family. Homodimer.

The enzyme catalyses N(1)-(5-phospho-beta-D-ribosyl)glycinamide + formate + ATP = N(2)-formyl-N(1)-(5-phospho-beta-D-ribosyl)glycinamide + ADP + phosphate + H(+). It functions in the pathway purine metabolism; IMP biosynthesis via de novo pathway; N(2)-formyl-N(1)-(5-phospho-D-ribosyl)glycinamide from N(1)-(5-phospho-D-ribosyl)glycinamide (formate route): step 1/1. In terms of biological role, involved in the de novo purine biosynthesis. Catalyzes the transfer of formate to 5-phospho-ribosyl-glycinamide (GAR), producing 5-phospho-ribosyl-N-formylglycinamide (FGAR). Formate is provided by PurU via hydrolysis of 10-formyl-tetrahydrofolate. In Erwinia tasmaniensis (strain DSM 17950 / CFBP 7177 / CIP 109463 / NCPPB 4357 / Et1/99), this protein is Formate-dependent phosphoribosylglycinamide formyltransferase.